Consider the following 168-residue polypeptide: UPF0178 protein RBAM_023530 (168 aa).

Belongs to the UPF0178 family.

This chain is UPF0178 protein RBAM_023530, found in Bacillus velezensis (strain DSM 23117 / BGSC 10A6 / LMG 26770 / FZB42) (Bacillus amyloliquefaciens subsp. plantarum).